A 173-amino-acid chain; its full sequence is Alpha-crystallin A chain (173 aa).

Met1 carries the N-acetylmethionine modification. The interval 1 to 63 (MDITIQHPWF…RTVLESGISE (63 aa)) is required for complex formation with BFSP1 and BFSP2. The residue at position 6 (Gln6) is a Deamidated glutamine; partial. Phosphoserine is present on Ser45. The residue at position 50 (Gln50) is a Deamidated glutamine; partial. The sHSP domain maps to 52 to 164 (LFRTVLESGI…SDRSIPVSRE (113 aa)). The residue at position 99 (Lys99) is an N6-acetyllysine. 3 residues coordinate Zn(2+): His100, Glu102, and His107. Residue Ser122 is modified to Phosphoserine. Asn123 bears the Deamidated asparagine; partial mark. A disordered region spans residues 144–173 (PKIHSNMESSHSDRSIPVSREEKPTLAPSS). Positions 153–167 (SHSDRSIPVSREEKP) are enriched in basic and acidic residues. His154 lines the Zn(2+) pocket. Ser162 is a glycosylation site (O-linked (GlcNAc) serine).

Belongs to the small heat shock protein (HSP20) family. In terms of assembly, heteromer composed of three CRYAA and one CRYAB subunits. Inter-subunit bridging via zinc ions enhances stability, which is crucial as there is no protein turn over in the lens. Can also form homodimers and homotetramers (dimers of dimers) which serve as the building blocks of homooligomers. Within homooligomers, the zinc-binding motif is created from residues of 3 different molecules. His-100 and Glu-102 from one molecule are ligands of the zinc ion, and His-107 and His-154 residues from additional molecules complete the site with tetrahedral coordination geometry. Part of a complex required for lens intermediate filament formation composed of BFSP1, BFSP2 and CRYAA. Acetylation at Lys-99 may increase chaperone activity. Post-translationally, undergoes age-dependent proteolytical cleavage at the C-terminus.

Its subcellular location is the cytoplasm. It localises to the nucleus. Contributes to the transparency and refractive index of the lens. Acts as a chaperone, preventing aggregation of various proteins under a wide range of stress conditions. Required for the correct formation of lens intermediate filaments as part of a complex composed of BFSP1, BFSP2 and CRYAA. The chain is Alpha-crystallin A chain (CRYAA) from Didelphis virginiana (North American opossum).